We begin with the raw amino-acid sequence, 414 residues long: Serine/threonine transporter SstT (414 aa).

8 helical membrane-spanning segments follow: residues 22–42, 54–74, 89–109, 148–168, 189–209, 223–243, 305–325, and 337–357; these read GLVL…TIGF, IFVK…VMAA, IIVL…IAGF, AIFK…GLAL, IVHV…AETL, LLAV…PILV, MAGA…TLGL, and IVAA…LLLI.

This sequence belongs to the dicarboxylate/amino acid:cation symporter (DAACS) (TC 2.A.23) family.

The protein localises to the cell inner membrane. The catalysed reaction is L-serine(in) + Na(+)(in) = L-serine(out) + Na(+)(out). The enzyme catalyses L-threonine(in) + Na(+)(in) = L-threonine(out) + Na(+)(out). Involved in the import of serine and threonine into the cell, with the concomitant import of sodium (symport system). The polypeptide is Serine/threonine transporter SstT (Haemophilus influenzae (strain PittEE)).